Reading from the N-terminus, the 280-residue chain is uncharacterized protein (280 aa).

The active-site Proton donor is the Y54. H116 is a binding site for substrate. 194-246 contributes to the NADP(+) binding site; sequence SPLMQGQLLDHPVLADIAQTYNKSVAQIILRWDLQHGIITIPKSTKEHRIKEN.

This sequence belongs to the aldo/keto reductase family.

This is an uncharacterized protein from Bacillus subtilis (strain 168).